We begin with the raw amino-acid sequence, 240 residues long: Putative protein FAM10A4 (240 aa).

Residues 38–94 form a disordered region; sequence MGGTATQKAKSEENTKEEKPDSKVEEDLKADEPSSEESDLEIDKEGVIEPDTDAPQE. Residues 46–69 show a composition bias toward basic and acidic residues; that stretch reads AKSEENTKEEKPDSKVEEDLKADE. Positions 85 to 94 are enriched in acidic residues; it reads IEPDTDAPQE. TPR repeat units lie at residues 110–143, 145–177, and 179–211; these read ANDK…NPRL, ILYA…NPDS, and QPYK…DYDE. The segment at 220-240 is disordered; that stretch reads VQPRAQKIAEHQRKYERKREE. Residues 226 to 240 are compositionally biased toward basic and acidic residues; that stretch reads KIAEHQRKYERKREE.

Belongs to the FAM10 family. In terms of tissue distribution, highly expressed in bone marrow and weakly in placenta, pancreas, heart and HeLa cell line.

It is found in the cytoplasm. This Homo sapiens (Human) protein is Putative protein FAM10A4 (ST13P4).